Reading from the N-terminus, the 156-residue chain is Cyanate hydratase (156 aa).

Catalysis depends on residues Arg96, Glu99, and Ser122.

Belongs to the cyanase family.

It carries out the reaction cyanate + hydrogencarbonate + 3 H(+) = NH4(+) + 2 CO2. Its function is as follows. Catalyzes the reaction of cyanate with bicarbonate to produce ammonia and carbon dioxide. The polypeptide is Cyanate hydratase (Burkholderia orbicola (strain MC0-3)).